Reading from the N-terminus, the 757-residue chain is Polyribonucleotide nucleotidyltransferase (757 aa).

2 residues coordinate Mg(2+): aspartate 482 and aspartate 488. Residues 549–608 (PRMLSFYIDKDKISAAIGSKGKNIRSVCERSNAKIEIGDDGKVSVFATSGTEAEIAKSMM) form the KH domain. One can recognise an S1 motif domain in the interval 618 to 686 (GSIVDVKVVR…KGGCPKLSRR (69 aa)). The interval 698–757 (GELYNEERKDGPNDRDNYYNNSFSRKPGGSHHKRPPRPHSGFSNRNRPKFGNNDSSSGFY) is disordered. A compositionally biased stretch (basic and acidic residues) spans 702-714 (NEERKDGPNDRDN). The span at 725-734 (GGSHHKRPPR) shows a compositional bias: basic residues.

Belongs to the polyribonucleotide nucleotidyltransferase family. Mg(2+) serves as cofactor.

The protein localises to the cytoplasm. It carries out the reaction RNA(n+1) + phosphate = RNA(n) + a ribonucleoside 5'-diphosphate. Its function is as follows. Involved in mRNA degradation. Catalyzes the phosphorolysis of single-stranded polyribonucleotides processively in the 3'- to 5'-direction. This chain is Polyribonucleotide nucleotidyltransferase, found in Wolbachia pipientis wMel.